The sequence spans 253 residues: FGFR1 oncogene partner 2 (253 aa).

Residues 5–104 (IEKALADAKA…SALELIMSKY (100 aa)) adopt a coiled-coil conformation. Phosphoserine is present on serine 141. A coiled-coil region spans residues 160 to 223 (LERRHLEANQ…LREILQITRE (64 aa)). The tract at residues 231–253 (DDASESTSLSALVTNSDLSLRKS) is disordered. Over residues 235–253 (ESTSLSALVTNSDLSLRKS) the composition is skewed to polar residues.

Belongs to the SIKE family. Expressed in bone marrow, spleen and thymus.

It localises to the cytoplasm. In terms of biological role, may be involved in wound healing pathway. The polypeptide is FGFR1 oncogene partner 2 (FGFR1OP2) (Homo sapiens (Human)).